Here is a 128-residue protein sequence, read N- to C-terminus: Large ribosomal subunit protein bL12 (128 aa).

This sequence belongs to the bacterial ribosomal protein bL12 family. In terms of assembly, homodimer. Part of the ribosomal stalk of the 50S ribosomal subunit. Forms a multimeric L10(L12)X complex, where L10 forms an elongated spine to which 2 to 4 L12 dimers bind in a sequential fashion. Binds GTP-bound translation factors.

Its function is as follows. Forms part of the ribosomal stalk which helps the ribosome interact with GTP-bound translation factors. Is thus essential for accurate translation. The chain is Large ribosomal subunit protein bL12 from Synechococcus sp. (strain CC9311).